A 208-amino-acid chain; its full sequence is MLALFLGSLSLIPFLLIVCTAFLKIAMTLLITRNAIGVQQVPPNMALYGIALAATMFVMAPVAHDIQQRVHEHPLELSNADKLQSSLKVVIEPLQRFMTRNTDPDVVAHLLENTQRMWPKEMADQANKNDLLLAIPAFVLSELQAGFEIGFLIYIPFIVIDLIVSNLLLALGMQMVSPMTLSLPLKLLLFVLVSGWSRLLDSLFYSYM.

Transmembrane regions (helical) follow at residues 2 to 22, 46 to 66, 149 to 169, and 176 to 196; these read LALF…CTAF, ALYG…AHDI, IGFL…NLLL, and VSPM…VSGW.

It belongs to the FliP/MopC/SpaP family.

The protein localises to the cell membrane. Required for the secretion of harpin. The polypeptide is Harpin secretion protein HrpW (hrpW) (Pseudomonas syringae pv. syringae).